Here is a 99-residue protein sequence, read N- to C-terminus: DNA-directed RNA polymerase subunit Rpo11 (99 aa).

This sequence belongs to the archaeal Rpo11/eukaryotic RPB11/RPC19 RNA polymerase subunit family. Part of the RNA polymerase complex. Forms an Rpo3-Rpo10-Rpo11-Rpo12 complex upon coexpression.

The protein localises to the cytoplasm. It carries out the reaction RNA(n) + a ribonucleoside 5'-triphosphate = RNA(n+1) + diphosphate. Its function is as follows. DNA-dependent RNA polymerase (RNAP) catalyzes the transcription of DNA into RNA using the four ribonucleoside triphosphates as substrates. This Methanocaldococcus jannaschii (strain ATCC 43067 / DSM 2661 / JAL-1 / JCM 10045 / NBRC 100440) (Methanococcus jannaschii) protein is DNA-directed RNA polymerase subunit Rpo11.